The chain runs to 516 residues: 2,3-bisphosphoglycerate-independent phosphoglycerate mutase (516 aa).

Mn(2+) contacts are provided by aspartate 15 and serine 65. Serine 65 serves as the catalytic Phosphoserine intermediate. Substrate is bound by residues histidine 126, 156–157 (RD), arginine 188, arginine 194, 263–266 (RADR), and lysine 336. Positions 403, 407, 444, 445, and 463 each coordinate Mn(2+).

This sequence belongs to the BPG-independent phosphoglycerate mutase family. In terms of assembly, monomer. Mn(2+) serves as cofactor.

It carries out the reaction (2R)-2-phosphoglycerate = (2R)-3-phosphoglycerate. Its pathway is carbohydrate degradation; glycolysis; pyruvate from D-glyceraldehyde 3-phosphate: step 3/5. Its function is as follows. Catalyzes the interconversion of 2-phosphoglycerate and 3-phosphoglycerate. The sequence is that of 2,3-bisphosphoglycerate-independent phosphoglycerate mutase from Francisella tularensis subsp. holarctica (strain OSU18).